The sequence spans 190 residues: Putative histone H1.6 (190 aa).

The tract at residues 1–29 (MSDVAVAETPAVKTPTKAPKANATKVPKV) is disordered. Serine 2 carries the N-acetylserine modification. Residues 9 to 29 (TPAVKTPTKAPKANATKVPKV) show a composition bias toward low complexity. An H15 domain is found at 34–110 (AHPPFINMVT…GATGRFRVAE (77 aa)). Residues 141–190 (KKTGDKVKKAKSPKKIAKPAAKKATKSPSKKVAPKKAAAKPAKKTAALKA) are disordered. The segment covering 148–183 (KKAKSPKKIAKPAAKKATKSPSKKVAPKKAAAKPAK) has biased composition (basic residues).

Belongs to the histone H1/H5 family.

Its subcellular location is the nucleus. The protein localises to the chromosome. Functionally, histones H1 are necessary for the condensation of nucleosome chains into higher-order structures. The protein is Putative histone H1.6 (hil-6) of Caenorhabditis elegans.